We begin with the raw amino-acid sequence, 1052 residues long: SWI/SNF-related matrix-associated actin-dependent regulator of chromatin subfamily A member 5 (1052 aa).

Positions 1–15 (MSSAAEPPPPPPPES) are enriched in pro residues. The tract at residues 1 to 83 (MSSAAEPPPP…QEPDPTYEEK (83 aa)) is disordered. N-acetylserine is present on serine 2. The span at 16 to 55 (APSKPAASIASGGSNSSNKGGPEGVAAQAVASAASAGPAD) shows a compositional bias: low complexity. At serine 66 the chain carries Phosphoserine. A compositionally biased stretch (basic and acidic residues) spans 69 to 83 (KQKEIQEPDPTYEEK). Lysine 83 is covalently cross-linked (Glycyl lysine isopeptide (Lys-Gly) (interchain with G-Cter in SUMO2)). Threonine 113 bears the Phosphothreonine mark. A phosphoserine mark is found at serine 116, serine 137, and serine 171. The Helicase ATP-binding domain occupies 192–357 (ISLYENGING…WSLLNFLLPD (166 aa)). 205-212 (DEMGLGKT) serves as a coordination point for ATP. The DEAH box motif lies at 308 to 311 (DEAH). Residue lysine 440 is modified to N6-acetyllysine. The 152-residue stretch at 487–638 (VLDKLLPKLK…SIVIQQGRLV (152 aa)) folds into the Helicase C-terminal domain. Residues lysine 644, lysine 647, lysine 694, lysine 722, and lysine 735 each participate in a glycyl lysine isopeptide (Lys-Gly) (interchain with G-Cter in SUMO2) cross-link. A phosphoserine mark is found at serine 755 and serine 825. 2 consecutive SANT domains span residues 840–892 (QGFT…ERCN) and 943–1007 (KGKN…LITL). Lysine 966 participates in a covalent cross-link: Glycyl lysine isopeptide (Lys-Gly) (interchain with G-Cter in SUMO2). The disordered stretch occupies residues 1015-1052 (LEEKEKAEKKKRGPKPSTQKRKMDGAPDGRGRKKKLKL). The segment covering 1023–1034 (KKKRGPKPSTQK) has biased composition (basic residues). Basic and acidic residues predominate over residues 1035–1044 (RKMDGAPDGR).

It belongs to the SNF2/RAD54 helicase family. ISWI subfamily. As to quaternary structure, component of the ACF-5 ISWI chromatin-remodeling complex (also called the ACF/WCRF complex) at least composed of SMARCA5/SNF2H and BAZ1A/ACF1, which regulates the spacing of histone octamers on the DNA template to facilitate access to DNA. Within the complex interacts with BAZ1A/ACF1; the interaction is direct and is required to slide nucleosomes from end to center positions on a DNA template in an ATP-dependent manner. Component of the CHRAC ISWI chromatin-remodeling complex at least composed of SMARCA5/SNF2H, BAZ1A/ACF1, CHRAC1 and POLE3; the complex preferentially binds DNA through the CHRAC1-POLE3 heterodimer and possesses ATP-dependent nucleosome-remodeling activity. Within the complex interacts with BAZ1A/ACF1; the interaction is direct and promotes the interaction with the POLE3-CHRAC1 heterodimer. Within the complex interacts with the POLE3-CHRAC1 heterodimer; the interaction is direct and enhances nucleosome sliding activity by the SMARCA5/SNF2H and BAZ1A/ACF1 interaction. Neither POLE3 nor CHRAC1 enhances nucleosome sliding activity of the ACF-5 ISWI chromatin remodeling complex. Component of the WICH-5 ISWI chromatin-remodeling complex (also called the WICH complex) at least composed of SMARCA5/SNF2H and BAZ1B/WSTF, which regulates the spacing of histone octamers on the DNA template to facilitate access to DNA. Within the complex interacts with BAZ1B/WSTF. Component of the NoRC-5 ISWI chromatin-remodeling complex (also called the NoRC chromatin-remodeling complex) at least composed of SMARCA5/SNF2H and BAZ2A/TIP5; the complex suppresses rDNA transcription by a combination of nucleosome remodeling, histone deacetylation, and DNA methylation. Within the complex interacts with BAZ2A/TIP5. Within the complex interacts with HDAC1. Component of the BRF-5 ISWI chromatin-remodeling complex at least composed of SMARCA5/SNF2H and BAZ2B. Within the complex interacts with BAZ2B. Component of the NURF-5 ISWI chromatin-remodeling complex at least composed of SMARCA5/SNF2H and BPTF. Within the complex interacts with BPFT. Component of the CERF-5 ISWI chromatin-remodeling complex at least composed of SMARCA5/SNF2H and CECR2. LUZP1 is detected as part of the CERF-5 complex in embryonic stem cells where it is involved in complex stabilization but is not detected in the complex in the testis. Within the complex interacts with CECR2. Component of the RSF-5 ISWI chromatin-remodeling complex (also called the RSF complex) at least composed of SMARCA5/SNF2H and RSF1. Within the complex interacts with RSF1. Interacts with the cohesin complex component RAD21; the interaction is direct. Interacts with the NuRD complex components HDAC2, RBBP4 and CHD4; the interactions are direct. Interacts with PCNA. Component of the B-WICH complex, at least composed of SMARCA5/SNF2H, BAZ1B/WSTF, SF3B1, DEK, MYO1C, ERCC6, MYBBP1A and DDX21 which positively regulates RNA polymerase III transcription. Interacts with MYO1C. Interacts with BEND3. Interacts with SIRT6; promoting recruitment to DNA damage sites. (Microbial infection) Interacts with JC virus small t antigen. In terms of assembly, (Microbial infection) Interacts with Epstein Barr virus (EBV) lytic switch protein BZLF1; this interaction participates to the activation of early lytic viral genes by BZLF1. Ubiquitously expressed.

It is found in the nucleus. It localises to the chromosome. It catalyses the reaction ATP + H2O = ADP + phosphate + H(+). In terms of biological role, ATPase that possesses intrinsic ATP-dependent nucleosome-remodeling activity. Catalytic subunit of ISWI chromatin-remodeling complexes, which form ordered nucleosome arrays on chromatin and facilitate access to DNA during DNA-templated processes such as DNA replication, transcription, and repair; this may require intact histone H4 tails. Within the ISWI chromatin-remodeling complexes, slides edge- and center-positioned histone octamers away from their original location on the DNA template. Catalytic activity and histone octamer sliding propensity is regulated and determined by components of the ISWI chromatin-remodeling complexes. The BAZ1A/ACF1-, BAZ1B/WSTF-, BAZ2A/TIP5- and BAZ2B-containing ISWI chromatin-remodeling complexes regulate the spacing of nucleosomes along the chromatin and have the ability to slide mononucleosomes to the center of a DNA template in an ATP-dependent manner. The CECR2- and RSF1-containing ISWI chromatin-remodeling complexes do not have the ability to slide mononucleosomes to the center of a DNA template. Binds to core histones together with RSF1, and is required for the assembly of regular nucleosome arrays by the RSF-5 ISWI chromatin-remodeling complex. Involved in DNA replication and together with BAZ1A/ACF1 is required for replication of pericentric heterochromatin in S-phase. Probably plays a role in repression of RNA polymerase I dependent transcription of the rDNA locus, through the recruitment of the SIN3/HDAC1 corepressor complex to the rDNA promoter. Essential component of the WICH-5 ISWI chromatin-remodeling complex (also called the WICH complex), a chromatin-remodeling complex that mobilizes nucleosomes and reconfigures irregular chromatin to a regular nucleosomal array structure. The WICH-5 ISWI chromatin-remodeling complex regulates the transcription of various genes, has a role in RNA polymerase I transcription. Within the B-WICH complex has a role in RNA polymerase III transcription. Mediates the histone H2AX phosphorylation at 'Tyr-142', and is involved in the maintenance of chromatin structures during DNA replication processes. Essential component of NoRC-5 ISWI chromatin-remodeling complex, a complex that mediates silencing of a fraction of rDNA by recruiting histone-modifying enzymes and DNA methyltransferases, leading to heterochromatin formation and transcriptional silencing. This is SWI/SNF-related matrix-associated actin-dependent regulator of chromatin subfamily A member 5 from Homo sapiens (Human).